Here is a 694-residue protein sequence, read N- to C-terminus: Elongation factor G (694 aa).

One can recognise a tr-type G domain in the interval Lys-6–Thr-288. GTP contacts are provided by residues Ala-15–Thr-22, Asp-86–His-90, and Asn-140–Asp-143.

Belongs to the TRAFAC class translation factor GTPase superfamily. Classic translation factor GTPase family. EF-G/EF-2 subfamily.

It is found in the cytoplasm. Catalyzes the GTP-dependent ribosomal translocation step during translation elongation. During this step, the ribosome changes from the pre-translocational (PRE) to the post-translocational (POST) state as the newly formed A-site-bound peptidyl-tRNA and P-site-bound deacylated tRNA move to the P and E sites, respectively. Catalyzes the coordinated movement of the two tRNA molecules, the mRNA and conformational changes in the ribosome. This is Elongation factor G from Legionella pneumophila subsp. pneumophila (strain Philadelphia 1 / ATCC 33152 / DSM 7513).